Reading from the N-terminus, the 73-residue chain is Translation initiation factor IF-1 (73 aa).

The 73-residue stretch at 1 to 73 (MAKKDGAIEV…TRGRIVYRYK (73 aa)) folds into the S1-like domain.

This sequence belongs to the IF-1 family. Component of the 30S ribosomal translation pre-initiation complex which assembles on the 30S ribosome in the order IF-2 and IF-3, IF-1 and N-formylmethionyl-tRNA(fMet); mRNA recruitment can occur at any time during PIC assembly.

Its subcellular location is the cytoplasm. Its function is as follows. One of the essential components for the initiation of protein synthesis. Stabilizes the binding of IF-2 and IF-3 on the 30S subunit to which N-formylmethionyl-tRNA(fMet) subsequently binds. Helps modulate mRNA selection, yielding the 30S pre-initiation complex (PIC). Upon addition of the 50S ribosomal subunit IF-1, IF-2 and IF-3 are released leaving the mature 70S translation initiation complex. This chain is Translation initiation factor IF-1, found in Mycolicibacterium gilvum (strain PYR-GCK) (Mycobacterium gilvum (strain PYR-GCK)).